The chain runs to 256 residues: Probable elongation factor 1-delta (256 aa).

3 positions are modified to phosphoserine: S37, S53, and S89. The interval 110–146 is disordered; that stretch reads NGVSKEPEVEAKKPEANDDDDDVDLFGSDSEEEDGEA. Residues 114 to 125 are compositionally biased toward basic and acidic residues; it reads KEPEVEAKKPEA. Over residues 126–144 the composition is skewed to acidic residues; the sequence is NDDDDDVDLFGSDSEEEDG. Phosphoserine is present on residues S137 and S139.

The protein belongs to the EF-1-beta/EF-1-delta family. EF-1 is composed of 4 subunits: alpha, beta, delta, and gamma.

In terms of biological role, EF-1-beta and EF-1-delta stimulate the exchange of GDP bound to EF-1-alpha to GTP. The protein is Probable elongation factor 1-delta (eEF1delta) of Drosophila melanogaster (Fruit fly).